A 219-amino-acid polypeptide reads, in one-letter code: HTH-type transcriptional regulator LutR (219 aa).

Residues 1–56 (MIKNGELKPGDKLDSVQALAESFQVSRSAVREALSALKAMGLVEMKQGEGTYLKEF) form the HTH gntR-type domain. Residues 16–35 (VQALAESFQVSRSAVREALS) constitute a DNA-binding region (H-T-H motif).

Negatively regulates the transcription of the lutABC operon, which is required for L-lactate utilization. LutR activity is regulated by lactate, since presence of L-lactate, that probably binds to LutR, leads to derepression of the operon. Also appears to be essential for bacilysin biosynthesis. This Bacillus subtilis (strain 168) protein is HTH-type transcriptional regulator LutR (lutR).